We begin with the raw amino-acid sequence, 75 residues long: uncharacterized protein (75 aa).

Positions 1–21 are cleaved as a signal peptide; it reads MRLIVVSIMVTLLSGCGSIIS.

This sequence to E.coli YidQ.

This is an uncharacterized protein from Escherichia coli O157:H7.